Here is a 111-residue protein sequence, read N- to C-terminus: Ig heavy chain V-III region HPC76 (111 aa).

The Ig-like domain maps to 1-110 (ESGGGLVQPG…WGQGTTLTVS (110 aa)).

The protein is Ig heavy chain V-III region HPC76 of Mus musculus (Mouse).